A 1167-amino-acid polypeptide reads, in one-letter code: C5a peptidase (1167 aa).

Positions 1–31 (MRKKQKLPFDKLAIALMSTSILLNAQSDIKA) are cleaved as a signal peptide. Residues 34-52 (VTEDTPVTEQAVETPQPTA) show a composition bias toward polar residues. The tract at residues 34-73 (VTEDTPVTEQAVETPQPTAVSEEVPSSKETKTPQTPDDAE) is disordered. In terms of domain architecture, Peptidase S8 spans 99–581 (KATIRDLNDP…AGAVDAKKAS (483 aa)). Residues D130, H193, and S512 each act as charge relay system in the active site. Residues 1029-1133 (EGHSNKPEQD…RDQLPTTNDK (105 aa)) form a disordered region. 4 consecutive repeat copies span residues 1034–1050 (KPEQ…KPEA), 1051–1067 (KPEQ…KPEA), 1068–1084 (KPEQ…KPET), and 1085–1101 (KPEK…TPQK). Residues 1034 to 1101 (KPEQDGSGQT…GQTPGKTPQK (68 aa)) form a 4 X 17 AA tandem repeats region. Composition is skewed to basic and acidic residues over residues 1044 to 1071 (PDKK…KPEQ) and 1078 to 1090 (PDKK…EKDS). Composition is skewed to polar residues over residues 1092 to 1106 (GQTP…QPSR) and 1120 to 1130 (KASTRDQLPTT). Positions 1127–1131 (LPTTN) match the LPXTG sorting signal motif. T1130 is subject to Pentaglycyl murein peptidoglycan amidated threonine. A propeptide spans 1131-1167 (NDKDTNRLHLLKLVMTTFFFGLVAHIFKTKRQKETKK) (removed by sortase).

The protein belongs to the peptidase S8 family. Post-translationally, cleaved by SpeB protease; leading to its degradation. Degradation by SpeB is probably strictly regulated to preserve integrity of C5a peptidase.

It localises to the secreted. The protein localises to the cell wall. It catalyses the reaction The primary cleavage site is at 67-His-|-Lys-68 in human C5a with a minor secondary cleavage site at 58-Ala-|-Ser-59.. This virulence factor of S.pyogenes specifically cleaves the human serum chemotaxin C5a at '68-Lys-|-Asp-69' bond near its C-terminus, destroying its ability to serve as a chemoattractant. The polypeptide is C5a peptidase (scpA) (Streptococcus pyogenes).